A 105-amino-acid chain; its full sequence is Met repressor (105 aa).

Belongs to the MetJ family. In terms of assembly, homodimer.

It localises to the cytoplasm. In terms of biological role, this regulatory protein, when combined with SAM (S-adenosylmethionine) represses the expression of the methionine regulon and of enzymes involved in SAM synthesis. This Serratia proteamaculans (strain 568) protein is Met repressor.